A 272-amino-acid polypeptide reads, in one-letter code: uncharacterized protein (272 aa).

The next 6 membrane-spanning stretches (helical) occupy residues 20–37 (VYLS…NLLI), 57–77 (HPLT…HFSL), 97–119 (LNVS…IMLM), 155–177 (SIAT…YVIF), 184–203 (LVSL…VTLG), and 234–256 (PYSI…WLVI).

Its subcellular location is the cell membrane. This is an uncharacterized protein from Halalkalibacterium halodurans (strain ATCC BAA-125 / DSM 18197 / FERM 7344 / JCM 9153 / C-125) (Bacillus halodurans).